The following is a 200-amino-acid chain: MPSLYLASGSPRRRELLTQIGVPFTVLSAQIDETPFDHETPAAYVERLALGKAQAGLSVLPAEQQACVMGADTAVVLDGRILGKPVDEADALAMLMALSGREHQVLTAVALCDRQRSDTRIVTSRVRFRPIQIHEAQAYWTSGEPADKAGGYAIQGLAAIFVEGLQGSYSGVVGLPLCETAELLGHFGIPCWQCLEGDKS.

The active-site Proton acceptor is the Asp-72.

The protein belongs to the Maf family. YhdE subfamily. A divalent metal cation is required as a cofactor.

It localises to the cytoplasm. It carries out the reaction dTTP + H2O = dTMP + diphosphate + H(+). The catalysed reaction is UTP + H2O = UMP + diphosphate + H(+). Nucleoside triphosphate pyrophosphatase that hydrolyzes dTTP and UTP. May have a dual role in cell division arrest and in preventing the incorporation of modified nucleotides into cellular nucleic acids. The chain is dTTP/UTP pyrophosphatase from Pseudomonas syringae pv. syringae (strain B728a).